Consider the following 246-residue polypeptide: Protein lin-37 homolog (246 aa).

The residue at position 1 (Met-1) is an N-acetylmethionine. Residues Lys-5 and Lys-7 each participate in a glycyl lysine isopeptide (Lys-Gly) (interchain with G-Cter in SUMO2) cross-link. Positions 36 to 55 are enriched in basic and acidic residues; sequence DRERLDEEPGKTSLDTHNKD. 2 disordered regions span residues 36–90 and 127–209; these read DRER…GGPQ and PTVR…LIYR. Residues Ser-135 and Ser-138 each carry the phosphoserine modification. Over residues 163–172 the composition is skewed to pro residues; the sequence is LPPPTAPGPP. A Phosphothreonine modification is found at Thr-167. A phosphoserine mark is found at Ser-182 and Ser-202.

Component of the DREAM complex (also named LINC complex) at least composed of E2F4, E2F5, LIN9, LIN37, LIN52, LIN54, MYBL1, MYBL2, RBL1, RBL2, RBBP4, TFDP1 and TFDP2. The complex exists in quiescent cells where it represses cell cycle-dependent genes. It dissociates in S phase when LIN9, LIN37, LIN52 and LIN54 form a subcomplex that binds to MYBL2.

The polypeptide is Protein lin-37 homolog (LIN37) (Bos taurus (Bovine)).